The primary structure comprises 299 residues: GTPase Era (299 aa).

In terms of domain architecture, Era-type G spans 4–171; sequence KSGFVAILGR…MEILKENLDE (168 aa). Positions 12–19 are G1; that stretch reads GRPNVGKS. Residue 12 to 19 participates in GTP binding; it reads GRPNVGKS. The segment at 38–42 is G2; that stretch reads QTTRN. Positions 59–62 are G3; sequence DTPG. GTP is bound by residues 59–63 and 121–124; these read DTPGI and NKID. Residues 121 to 124 form a G4 region; it reads NKID. Residues 150 to 152 form a G5 region; it reads ISA. The KH type-2 domain occupies 202-280; it reads TREEIPHSVA…FLETWVKVKK (79 aa).

It belongs to the TRAFAC class TrmE-Era-EngA-EngB-Septin-like GTPase superfamily. Era GTPase family. In terms of assembly, monomer.

The protein localises to the cytoplasm. Its subcellular location is the cell membrane. In terms of biological role, an essential GTPase that binds both GDP and GTP, with rapid nucleotide exchange. Plays a role in 16S rRNA processing and 30S ribosomal subunit biogenesis and possibly also in cell cycle regulation and energy metabolism. This Streptococcus suis (strain 98HAH33) protein is GTPase Era.